We begin with the raw amino-acid sequence, 513 residues long: Glutamate--tRNA ligase 2 (513 aa).

Positions 11–21 (PSPTGFLHIGS) match the 'HIGH' region motif. The short motif at 240–244 (KLSKR) is the 'KMSKS' region element. Lysine 243 provides a ligand contact to ATP. Residues 335–383 (NTLLRHLPYREEFGGNTERSTAAYIDIREDASTGLTYKLPLAVELPKKF) enclose the RPE1 insert domain.

The protein belongs to the class-I aminoacyl-tRNA synthetase family. Glutamate--tRNA ligase type 1 subfamily. Monomer.

The protein localises to the cytoplasm. The catalysed reaction is tRNA(Glu) + L-glutamate + ATP = L-glutamyl-tRNA(Glu) + AMP + diphosphate. Catalyzes the attachment of glutamate to tRNA(Glu) in a two-step reaction: glutamate is first activated by ATP to form Glu-AMP and then transferred to the acceptor end of tRNA(Glu). This Rickettsia conorii (strain ATCC VR-613 / Malish 7) protein is Glutamate--tRNA ligase 2.